We begin with the raw amino-acid sequence, 450 residues long: tRNA modification GTPase MnmE (450 aa).

Residues K21, E78, and K117 each coordinate (6S)-5-formyl-5,6,7,8-tetrahydrofolate. Residues 213 to 376 (GHALSIVGKP…LSQKISAFFP (164 aa)) enclose the TrmE-type G domain. N223 is a K(+) binding site. GTP is bound by residues 223–228 (NAGKSS), 242–248 (SDIKGTT), and 267–270 (DTAG). S227 contributes to the Mg(2+) binding site. 3 residues coordinate K(+): S242, I244, and T247. T248 contacts Mg(2+). K450 is a (6S)-5-formyl-5,6,7,8-tetrahydrofolate binding site.

Belongs to the TRAFAC class TrmE-Era-EngA-EngB-Septin-like GTPase superfamily. TrmE GTPase family. As to quaternary structure, homodimer. Heterotetramer of two MnmE and two MnmG subunits. K(+) is required as a cofactor.

The protein localises to the cytoplasm. Exhibits a very high intrinsic GTPase hydrolysis rate. Involved in the addition of a carboxymethylaminomethyl (cmnm) group at the wobble position (U34) of certain tRNAs, forming tRNA-cmnm(5)s(2)U34. This chain is tRNA modification GTPase MnmE, found in Helicobacter pylori (strain Shi470).